A 20-amino-acid chain; its full sequence is Trypsin inhibitor (20 aa).

The tract at residues Ala-1–Asp-20 is disordered.

Hemolymph.

Its subcellular location is the secreted. The protein resides in the extracellular space. Inhibits trypsin stoichiometrically. Also inhibits chymotrypsin very weakly. The protein is Trypsin inhibitor of Mythimna unipuncta (Armyworm moth).